Here is an 862-residue protein sequence, read N- to C-terminus: Cell surface glycoprotein (862 aa).

The first 34 residues, 1-34 (MTDTQQKIKAVLLTVLMVTSVFAATIAFSGAAAA), serve as a signal peptide directing secretion. Disordered regions lie at residues 35 to 60 (SERGAGDSYTTGPTDGNQDNVDSAGN), 101 to 126 (ILLESPIPQDQPTGRYTANPGVEGTE), and 200 to 220 (VNTNVNNDDHPNPAADGDRDD). Residues 43-57 (YTTGPTDGNQDNVDS) show a composition bias toward polar residues. Positions 206–220 (NDDHPNPAADGDRDD) are enriched in basic and acidic residues. N-linked (GlcNAc...) asparagine glycans are attached at residues Asn442, Asn520, Asn550, Asn702, and Asn761. The disordered stretch occupies residues 752–838 (LSDENVEPGN…TEEATTEATG (87 aa)). The segment covering 784–801 (SLEEEQPATDTPEPDTDT) has biased composition (acidic residues). Residues 802-815 (PEPATDTPEPATDT) are compositionally biased toward low complexity. Acidic residues predominate over residues 816–833 (PEPDTDTPEPDTETEEAT). A helical membrane pass occupies residues 838-858 (GPGFTAAIALIALVAAALLAV). The short motif at 839–841 (PGF) is the PGF sorting signal element.

Belongs to the halobacterial S-layer protein family. In terms of processing, glycosylated. Cleaved by the archaeosortase ArtA at the C-terminus, with removal of a short hydrophobic segment. Post-translationally, lipidation.

It localises to the secreted. The protein resides in the cell wall. Its subcellular location is the S-layer. It is found in the cell membrane. Its function is as follows. S-layer protein. The S-layer is a paracrystalline mono-layered assembly of proteins which coat the surface of the cell. In Haloarcula japonica (strain ATCC 49778 / DSM 6131 / JCM 7785 / NBRC 101032 / NCIMB 13157 / TR-1), this protein is Cell surface glycoprotein.